The following is a 431-amino-acid chain: Glutamyl-tRNA reductase (431 aa).

Substrate-binding positions include 49–52, Ser-109, 114–116, and Gln-120; these read TCDR and EPH. The active-site Nucleophile is the Cys-50. 189-194 is an NADP(+) binding site; it reads GTQEMG.

The protein belongs to the glutamyl-tRNA reductase family. Homodimer.

The enzyme catalyses (S)-4-amino-5-oxopentanoate + tRNA(Glu) + NADP(+) = L-glutamyl-tRNA(Glu) + NADPH + H(+). It functions in the pathway porphyrin-containing compound metabolism; protoporphyrin-IX biosynthesis; 5-aminolevulinate from L-glutamyl-tRNA(Glu): step 1/2. The protein operates within porphyrin-containing compound metabolism; chlorophyll biosynthesis. Its function is as follows. Catalyzes the NADPH-dependent reduction of glutamyl-tRNA(Glu) to glutamate 1-semialdehyde (GSA). The chain is Glutamyl-tRNA reductase from Rhodospirillum rubrum (strain ATCC 11170 / ATH 1.1.1 / DSM 467 / LMG 4362 / NCIMB 8255 / S1).